A 404-amino-acid polypeptide reads, in one-letter code: Tryptophan synthase beta chain (404 aa).

Lys-94 is modified (N6-(pyridoxal phosphate)lysine).

It belongs to the TrpB family. Tetramer of two alpha and two beta chains. It depends on pyridoxal 5'-phosphate as a cofactor.

The enzyme catalyses (1S,2R)-1-C-(indol-3-yl)glycerol 3-phosphate + L-serine = D-glyceraldehyde 3-phosphate + L-tryptophan + H2O. The protein operates within amino-acid biosynthesis; L-tryptophan biosynthesis; L-tryptophan from chorismate: step 5/5. The beta subunit is responsible for the synthesis of L-tryptophan from indole and L-serine. The protein is Tryptophan synthase beta chain of Staphylococcus aureus (strain bovine RF122 / ET3-1).